We begin with the raw amino-acid sequence, 229 residues long: Small ribosomal subunit protein uS3 (229 aa).

Positions 39 to 107 (VRQYLTEKLK…TAQINIAEIR (69 aa)) constitute a KH type-2 domain.

It belongs to the universal ribosomal protein uS3 family. As to quaternary structure, part of the 30S ribosomal subunit. Forms a tight complex with proteins S10 and S14.

Its function is as follows. Binds the lower part of the 30S subunit head. Binds mRNA in the 70S ribosome, positioning it for translation. The sequence is that of Small ribosomal subunit protein uS3 from Shewanella denitrificans (strain OS217 / ATCC BAA-1090 / DSM 15013).